Here is a 199-residue protein sequence, read N- to C-terminus: Molybdenum cofactor guanylyltransferase (199 aa).

GTP is bound by residues leucine 12–glycine 14, lysine 25, asparagine 53, aspartate 71, and aspartate 101. Aspartate 101 serves as a coordination point for Mg(2+).

It belongs to the MobA family. In terms of assembly, monomer. Mg(2+) serves as cofactor.

It is found in the cytoplasm. It carries out the reaction Mo-molybdopterin + GTP + H(+) = Mo-molybdopterin guanine dinucleotide + diphosphate. Functionally, transfers a GMP moiety from GTP to Mo-molybdopterin (Mo-MPT) cofactor (Moco or molybdenum cofactor) to form Mo-molybdopterin guanine dinucleotide (Mo-MGD) cofactor. The sequence is that of Molybdenum cofactor guanylyltransferase from Cupriavidus pinatubonensis (strain JMP 134 / LMG 1197) (Cupriavidus necator (strain JMP 134)).